The following is a 330-amino-acid chain: Aspartate--ammonia ligase (330 aa).

Belongs to the class-II aminoacyl-tRNA synthetase family. AsnA subfamily.

The protein localises to the cytoplasm. The enzyme catalyses L-aspartate + NH4(+) + ATP = L-asparagine + AMP + diphosphate + H(+). Its pathway is amino-acid biosynthesis; L-asparagine biosynthesis; L-asparagine from L-aspartate (ammonia route): step 1/1. This is Aspartate--ammonia ligase from Photorhabdus laumondii subsp. laumondii (strain DSM 15139 / CIP 105565 / TT01) (Photorhabdus luminescens subsp. laumondii).